The chain runs to 391 residues: Cystathionine beta-lyase MetC (391 aa).

Lys-196 carries the N6-(pyridoxal phosphate)lysine modification.

This sequence belongs to the trans-sulfuration enzymes family. As to quaternary structure, homotetramer. Pyridoxal 5'-phosphate is required as a cofactor.

The catalysed reaction is L,L-cystathionine + H2O = L-homocysteine + pyruvate + NH4(+). It carries out the reaction an S-substituted L-cysteine + H2O = a thiol + pyruvate + NH4(+). It functions in the pathway amino-acid biosynthesis; L-methionine biosynthesis via de novo pathway; L-homocysteine from L-cystathionine: step 1/1. Cystathionine beta-lyase activity is inhibited by sweat components such as glycine, serine and ammonium sulfate. Inhibited by cystathionine at a concentration higher than 6 mM. Its function is as follows. Catalyzes the transformation of cystathionine into homocysteine. Can also catalyze, at low levels, the conversion of cystathionine into methionine and the conversion of methionine into methanethiol. The chain is Cystathionine beta-lyase MetC from Staphylococcus haemolyticus (strain JCSC1435).